Consider the following 362-residue polypeptide: Flagellar P-ring protein (362 aa).

A signal peptide spans 1 to 15 (MLAAALMSAAFGAHA).

It belongs to the FlgI family. The basal body constitutes a major portion of the flagellar organelle and consists of four rings (L,P,S, and M) mounted on a central rod.

The protein localises to the periplasm. It is found in the bacterial flagellum basal body. In terms of biological role, assembles around the rod to form the L-ring and probably protects the motor/basal body from shearing forces during rotation. The chain is Flagellar P-ring protein from Pseudomonas fluorescens (strain Pf0-1).